The chain runs to 150 residues: UPF0756 membrane protein NT05HA_0561 (150 aa).

A run of 4 helical transmembrane segments spans residues Met-1–Phe-21, Tyr-52–Gly-72, Ala-81–Ala-101, and Phe-128–Gly-148.

The protein belongs to the UPF0756 family.

Its subcellular location is the cell membrane. The chain is UPF0756 membrane protein NT05HA_0561 from Aggregatibacter aphrophilus (strain NJ8700) (Haemophilus aphrophilus).